Reading from the N-terminus, the 356-residue chain is MQTLHALLRDIPAPDAEAMARAQQHIDGLLKPPGSLGRLEALAVQLAGMPGLNGTPQVGEKAMLVMCADHGVWDEGVAVSPKIVTAIQAANMTRGTTGVCVLAAQAGAKVHVIDVGIDAEPIPGVVDMRVARGCGNIAVGPAMSRSQAEALLLEVSRYTCDLAQRGVTLFGVGELGMANTTPAAAMVSVFTGSDAKEVVGIGANLPPSRIDNKVDVVRRAIAINQPNPRDGIDVLSKVGGFDLVGMTGVMLGAARCGLPVLLDGFLSYSAALAACQIAPAVRPYLIPSHFSAEKGARIALAHLSMEPYLHMAMRLGEGSGAALAMPIVEAACAMFHNMGELAASNIVLPEGNANAT.

The Proton acceptor role is filled by glutamate 317.

The protein belongs to the CobT family. As to quaternary structure, homodimer.

The catalysed reaction is 5,6-dimethylbenzimidazole + nicotinate beta-D-ribonucleotide = alpha-ribazole 5'-phosphate + nicotinate + H(+). It participates in nucleoside biosynthesis; alpha-ribazole biosynthesis; alpha-ribazole from 5,6-dimethylbenzimidazole: step 1/2. In terms of biological role, catalyzes the synthesis of alpha-ribazole-5'-phosphate from nicotinate mononucleotide (NAMN) and 5,6-dimethylbenzimidazole (DMB). The chain is Nicotinate-nucleotide--dimethylbenzimidazole phosphoribosyltransferase from Salmonella schwarzengrund (strain CVM19633).